Here is a 185-residue protein sequence, read N- to C-terminus: Ribosome-recycling factor (185 aa).

This sequence belongs to the RRF family.

Its subcellular location is the cytoplasm. Responsible for the release of ribosomes from messenger RNA at the termination of protein biosynthesis. May increase the efficiency of translation by recycling ribosomes from one round of translation to another. This is Ribosome-recycling factor from Shewanella sp. (strain MR-4).